Reading from the N-terminus, the 57-residue chain is Weak toxin CM-1b (57 aa).

4 disulfide bridges follow: C3–C19, C12–C37, C40–C49, and C50–C55.

It belongs to the three-finger toxin family. Short-chain subfamily. Orphan group XX sub-subfamily. As to expression, expressed by the venom gland.

Its subcellular location is the secreted. This is Weak toxin CM-1b from Hemachatus haemachatus (Rinkhals).